Reading from the N-terminus, the 467-residue chain is Dimethylamine methyltransferase MtbB3 (467 aa).

Residue Pyl356 is a non-standard amino acid, pyrrolysine.

The protein belongs to the dimethylamine methyltransferase family.

The catalysed reaction is Co(I)-[dimethylamine-specific corrinoid protein] + dimethylamine + H(+) = methyl-Co(III)-[dimethylamine-specific corrinoid protein] + methylamine. The protein operates within one-carbon metabolism; methanogenesis from dimethylamine. Functionally, catalyzes the transfer of a methyl group from dimethylamine to the corrinoid cofactor of MtbC. The polypeptide is Dimethylamine methyltransferase MtbB3 (mtbB3) (Methanosarcina acetivorans (strain ATCC 35395 / DSM 2834 / JCM 12185 / C2A)).